A 552-amino-acid polypeptide reads, in one-letter code: Cation/acetate symporter ActP (552 aa).

14 consecutive transmembrane segments (helical) span residues 6 to 26 (LLAV…AIAG), 35 to 55 (MEAI…TYWA), 78 to 98 (GLAM…SALV), 103 to 123 (FDGL…LFLI), 151 to 171 (LSAC…MVGA), 185 to 205 (VAVV…GMLA), 208 to 228 (WVQI…AIMV), 264 to 284 (ISAL…PHIL), 305 to 325 (GLMG…ILLV), 357 to 377 (LFLG…VAGL), 407 to 427 (VSKI…ILFE), 431 to 451 (IAFM…PIIL), 467 to 487 (GGWL…TIWV), and 496 to 516 (IFPY…GTWL).

It belongs to the sodium:solute symporter (SSF) (TC 2.A.21) family.

The protein localises to the cell inner membrane. In terms of biological role, transports acetate. The protein is Cation/acetate symporter ActP of Erwinia tasmaniensis (strain DSM 17950 / CFBP 7177 / CIP 109463 / NCPPB 4357 / Et1/99).